A 346-amino-acid chain; its full sequence is Protein RecA (346 aa).

Residue 67–74 (GPESSGKT) participates in ATP binding.

It belongs to the RecA family.

The protein resides in the cytoplasm. Its function is as follows. Can catalyze the hydrolysis of ATP in the presence of single-stranded DNA, the ATP-dependent uptake of single-stranded DNA by duplex DNA, and the ATP-dependent hybridization of homologous single-stranded DNAs. It interacts with LexA causing its activation and leading to its autocatalytic cleavage. The sequence is that of Protein RecA from Mycobacteroides abscessus (strain ATCC 19977 / DSM 44196 / CCUG 20993 / CIP 104536 / JCM 13569 / NCTC 13031 / TMC 1543 / L948) (Mycobacterium abscessus).